We begin with the raw amino-acid sequence, 157 residues long: Capsid protein (157 aa).

The residue at position 2 (S2) is an N-acetylserine; by host.

It belongs to the virgaviridae capsid protein family.

The protein localises to the virion. Functionally, capsid protein self-assembles to form rod-shaped virions about 18 nm in diameter with a central canal enclosing the viral genomic RNA. This Digitalis lanata (Grecian foxglove) protein is Capsid protein (CP).